The primary structure comprises 385 residues: Outer membrane porin protein BP0840 (385 aa).

Positions 1-20 (MKKTLLAAALLAGFAGAAQA) are cleaved as a signal peptide.

To bacterial outer membrane proteins and porins. In terms of assembly, homotrimer.

The protein localises to the cell outer membrane. Its function is as follows. Forms anion selective channels. In Bordetella pertussis (strain Tohama I / ATCC BAA-589 / NCTC 13251), this protein is Outer membrane porin protein BP0840.